The primary structure comprises 191 residues: dTTP/UTP pyrophosphatase (191 aa).

Asp-71 serves as the catalytic Proton acceptor.

It belongs to the Maf family. YhdE subfamily. A divalent metal cation serves as cofactor.

It is found in the cytoplasm. It catalyses the reaction dTTP + H2O = dTMP + diphosphate + H(+). It carries out the reaction UTP + H2O = UMP + diphosphate + H(+). In terms of biological role, nucleoside triphosphate pyrophosphatase that hydrolyzes dTTP and UTP. May have a dual role in cell division arrest and in preventing the incorporation of modified nucleotides into cellular nucleic acids. This chain is dTTP/UTP pyrophosphatase, found in Geobacter sulfurreducens (strain ATCC 51573 / DSM 12127 / PCA).